Here is an 89-residue protein sequence, read N- to C-terminus: Small ribosomal subunit protein uS15 (89 aa).

This sequence belongs to the universal ribosomal protein uS15 family. Part of the 30S ribosomal subunit. Forms a bridge to the 50S subunit in the 70S ribosome, contacting the 23S rRNA.

One of the primary rRNA binding proteins, it binds directly to 16S rRNA where it helps nucleate assembly of the platform of the 30S subunit by binding and bridging several RNA helices of the 16S rRNA. Its function is as follows. Forms an intersubunit bridge (bridge B4) with the 23S rRNA of the 50S subunit in the ribosome. In Parafrankia sp. (strain EAN1pec), this protein is Small ribosomal subunit protein uS15.